Reading from the N-terminus, the 406-residue chain is 2,3-bisphosphoglycerate-independent phosphoglycerate mutase (406 aa).

The span at 156-165 (ITEGDPHKEG) shows a compositional bias: basic and acidic residues. The tract at residues 156-177 (ITEGDPHKEGVPIPEVKPLDNS) is disordered.

It belongs to the BPG-independent phosphoglycerate mutase family. A-PGAM subfamily.

It carries out the reaction (2R)-2-phosphoglycerate = (2R)-3-phosphoglycerate. It participates in carbohydrate degradation; glycolysis; pyruvate from D-glyceraldehyde 3-phosphate: step 3/5. Catalyzes the interconversion of 2-phosphoglycerate and 3-phosphoglycerate. This chain is 2,3-bisphosphoglycerate-independent phosphoglycerate mutase, found in Methanococcus aeolicus (strain ATCC BAA-1280 / DSM 17508 / OCM 812 / Nankai-3).